A 94-amino-acid polypeptide reads, in one-letter code: PqqA binding protein (94 aa).

Belongs to the PqqD family. Monomer. Interacts with PqqE.

Its pathway is cofactor biosynthesis; pyrroloquinoline quinone biosynthesis. Functions as a PqqA binding protein and presents PqqA to PqqE, in the pyrroloquinoline quinone (PQQ) biosynthetic pathway. The protein is PqqA binding protein of Acinetobacter baumannii (strain AB307-0294).